A 142-amino-acid polypeptide reads, in one-letter code: Large ribosomal subunit protein mL42 (142 aa).

The transit peptide at 1–32 directs the protein to the mitochondrion; that stretch reads MAVAAVKWVMSKRTILKHLFPVQNGALYCVCH.

It belongs to the mitochondrion-specific ribosomal protein mL42 family. Component of the mitochondrial large ribosomal subunit (mt-LSU). Mature mammalian 55S mitochondrial ribosomes consist of a small (28S) and a large (39S) subunit. The 28S small subunit contains a 12S ribosomal RNA (12S mt-rRNA) and 30 different proteins. The 39S large subunit contains a 16S rRNA (16S mt-rRNA), a copy of mitochondrial valine transfer RNA (mt-tRNA(Val)), which plays an integral structural role, and 52 different proteins.

It localises to the mitochondrion. The chain is Large ribosomal subunit protein mL42 (MRPL42) from Homo sapiens (Human).